A 930-amino-acid chain; its full sequence is Wings apart-like protein 1 (930 aa).

The tract at residues 540-566 (FSPTSMSGSQSSVSGNEPTTSKTRVGS) is disordered. The span at 541–553 (SPTSMSGSQSSVS) shows a compositional bias: low complexity. Over residues 554 to 566 (GNEPTTSKTRVGS) the composition is skewed to polar residues. The WAPL domain maps to 854–909 (KEAEKMIVEAYSALLLAFLSTESRSIRNSIKDYLPKRNLAILVPVLERFVAFHMTL).

The protein belongs to the WAPL family. In terms of assembly, interacts with the cohesin complex throughout the cell cycle. Expressed in roots, leaves, buds and siliques.

Its subcellular location is the nucleus. The protein localises to the chromosome. In terms of biological role, regulator of sister chromatid cohesion in meiosis which negatively regulates cohesin association with chromatin, acting as an antagonist of CTF7. Cohesion ensures that chromosome partitioning is accurate in both meiotic and mitotic cells and plays an important role in DNA repair. Essential for the prophase removal of cohesin during meiosis thus determining the timely release of meiotic cohesion. Important for proper spindle attachment and assembly during meiosis. Helps to prevent abnormal centromere association during prophase I in meiocytes. Required for early embryonic patterning. Also involved in chromosome segregation during mitosis. This is Wings apart-like protein 1 from Arabidopsis thaliana (Mouse-ear cress).